A 137-amino-acid chain; its full sequence is MRTLWIMAVLLLGVEGSLVELWKMVFQETGKEAVKNYGLYGCNCGVGKRGKPVDATDRCCFVHRCCYKKVTGCDPKKDRYSYSWENKAIVCGEKNPCLKQVCECDKAVAICLRENLGTYNKNHRVTVKFLCKAPESC.

An N-terminal signal peptide occupies residues methionine 1–glycine 16. 7 disulfides stabilise this stretch: cysteine 42–cysteine 131, cysteine 44–cysteine 60, cysteine 59–cysteine 111, cysteine 65–cysteine 137, cysteine 66–cysteine 104, cysteine 73–cysteine 97, and cysteine 91–cysteine 102. The active site involves histidine 63. Residue aspartate 105 is part of the active site.

This sequence belongs to the phospholipase A2 family. Group II subfamily. R49 sub-subfamily. Expressed by the venom gland.

The protein resides in the secreted. The enzyme catalyses a 1,2-diacyl-sn-glycero-3-phosphocholine + H2O = a 1-acyl-sn-glycero-3-phosphocholine + a fatty acid + H(+). Snake venom phospholipases A2 that have myotoxic, and edema-inducing activity, as well as extremely weak lipolytic activity. PLA2 catalyzes the calcium-dependent hydrolysis of the 2-acyl groups in 3-sn-phosphoglycerides. The protein is Basic phospholipase A2 PeBP(R)-I/II of Protobothrops elegans (Elegant pitviper).